The following is a 234-amino-acid chain: Ribosomal RNA small subunit methyltransferase G (234 aa).

Residues G96, L101, 119–121 (DAT), 147–148 (VE), and R161 contribute to the S-adenosyl-L-methionine site.

It belongs to the methyltransferase superfamily. RNA methyltransferase RsmG family.

The protein localises to the cytoplasm. Functionally, specifically methylates the N7 position of a guanine in 16S rRNA. This is Ribosomal RNA small subunit methyltransferase G from Chlorobium chlorochromatii (strain CaD3).